A 116-amino-acid polypeptide reads, in one-letter code: Large ribosomal subunit protein bL19 (116 aa).

Belongs to the bacterial ribosomal protein bL19 family.

Functionally, this protein is located at the 30S-50S ribosomal subunit interface and may play a role in the structure and function of the aminoacyl-tRNA binding site. In Staphylococcus carnosus (strain TM300), this protein is Large ribosomal subunit protein bL19.